We begin with the raw amino-acid sequence, 679 residues long: Membrane-spanning 4-domains subfamily A member 14 (679 aa).

4 consecutive transmembrane segments (helical) span residues 50-70 (ILLA…YIGF), 76-96 (LVVL…TGYL), 110-130 (VTGM…FTIL), and 141-161 (MPSF…LFFL). Disordered regions lie at residues 218–259 (VSQP…EKKP), 331–363 (SEQT…ILSQ), 469–491 (KEWK…LNQQ), and 505–633 (VQAK…QAQV). The segment covering 224–234 (KGREFVPDEQK) has biased composition (basic and acidic residues). A compositionally biased stretch (low complexity) spans 337 to 348 (SKSTSSHVKQSS). Residues 469 to 478 (KEWKSEEELH) are compositionally biased toward basic and acidic residues. 2 stretches are compositionally biased toward polar residues: residues 519 to 535 (DQQS…SLDQ) and 550 to 563 (KQAQ…QLPD). Over residues 580 to 601 (QSKDGQVKDQQTDKEQNSKKQT) the composition is skewed to basic and acidic residues. The segment covering 619–632 (GQFQNVQAEGQQAQ) has biased composition (polar residues).

This sequence belongs to the MS4A family.

The protein resides in the membrane. Its function is as follows. May be involved in signal transduction as a component of a multimeric receptor complex. This is Membrane-spanning 4-domains subfamily A member 14 (MS4A14) from Homo sapiens (Human).